Here is a 435-residue protein sequence, read N- to C-terminus: Serine--tRNA ligase (435 aa).

233–235 lines the L-serine pocket; it reads TAE. Position 264-266 (264-266) interacts with ATP; that stretch reads RAE. Glu287 provides a ligand contact to L-serine. 351–354 is a binding site for ATP; sequence EISS. Ser386 contributes to the L-serine binding site.

This sequence belongs to the class-II aminoacyl-tRNA synthetase family. Type-1 seryl-tRNA synthetase subfamily. In terms of assembly, homodimer. The tRNA molecule binds across the dimer.

The protein resides in the cytoplasm. It carries out the reaction tRNA(Ser) + L-serine + ATP = L-seryl-tRNA(Ser) + AMP + diphosphate + H(+). It catalyses the reaction tRNA(Sec) + L-serine + ATP = L-seryl-tRNA(Sec) + AMP + diphosphate + H(+). It functions in the pathway aminoacyl-tRNA biosynthesis; selenocysteinyl-tRNA(Sec) biosynthesis; L-seryl-tRNA(Sec) from L-serine and tRNA(Sec): step 1/1. In terms of biological role, catalyzes the attachment of serine to tRNA(Ser). Is also able to aminoacylate tRNA(Sec) with serine, to form the misacylated tRNA L-seryl-tRNA(Sec), which will be further converted into selenocysteinyl-tRNA(Sec). The chain is Serine--tRNA ligase from Anaeromyxobacter sp. (strain K).